A 431-amino-acid chain; its full sequence is Inactive polypeptide N-acetylgalactosaminyltransferase-like protein 5 (431 aa).

Residues 1–4 (MKSV) are Cytoplasmic-facing. The helical; Signal-anchor for type II membrane protein transmembrane segment at 5-27 (IIQGLFCGFLAIGLWASMLLLFL) threads the bilayer. Over 28–431 (HLEQEDMLEN…TERKRKKNRF (404 aa)) the chain is Lumenal. Asn-68 carries an N-linked (GlcNAc...) asparagine glycan. 2 disulfide bridges follow: Cys-105–Cys-336 and Cys-327–Cys-403. The tract at residues 114–224 (LPTASIIICF…RVWLEPLLHA (111 aa)) is catalytic subdomain A. The interval 282-344 (PIRSPAMTGG…PCSRVGYNSK (63 aa)) is catalytic subdomain B. Asn-353 and Asn-390 each carry an N-linked (GlcNAc...) asparagine glycan.

It belongs to the glycosyltransferase 2 family. GalNAc-T subfamily. The cofactor is Mn(2+). As to expression, expressed in testis. Mainly expressed in the round and elongated spermatids during spermiogenesis, not in the outermost cells of the seminiferous tubules, which contain spermatogonia and somatic Sertoli cells. Present in the juxtanuclear space in the round spermatids, not in the acrosomal vesicles. In the elongating spermatids, localizes strongly in the acroplaxome, the region between the developing acrosome and nucleus. During differentiation, also weakly detected in the transient manchette containing microtubules. In epididymal spermatozoa, weakly detected in the midpiece, but concentrates mainly in the neck region around the head-tail coupling apparatus (at protein level).

The protein localises to the late endosome membrane. Its function is as follows. Probable inactive glycosyltransferase required during spermatid development. May participate in protein loading into the acrosomes and accumulation of ubiquitin-proteasome systems around the head-tail coupling apparatus region. The protein is Inactive polypeptide N-acetylgalactosaminyltransferase-like protein 5 (Galntl5) of Mus musculus (Mouse).